We begin with the raw amino-acid sequence, 24 residues long: Calreticulin (24 aa).

The protein belongs to the calreticulin family. As to quaternary structure, monomer. Component of an EIF2 complex at least composed of CELF1/CUGBP1, CALR, CALR3, EIF2S1, EIF2S2, HSP90B1 and HSPA5. Interacts with PDIA3/ERp57 and SPACA9. Interacts with TRIM21. Interacts with NR3C1. Interacts with PPIB. Interacts (via P-domain) with PDIA5. Interacts with CLCC1. In terms of tissue distribution, pancreas.

The protein resides in the endoplasmic reticulum lumen. It localises to the cytoplasm. It is found in the cytosol. The protein localises to the cytolytic granule. Its subcellular location is the secreted. The protein resides in the extracellular space. It localises to the extracellular matrix. It is found in the cell surface. The protein localises to the sarcoplasmic reticulum lumen. Its subcellular location is the cytoplasmic vesicle. The protein resides in the secretory vesicle. It localises to the cortical granule. Calcium-binding chaperone that promotes folding, oligomeric assembly and quality control in the endoplasmic reticulum (ER) via the calreticulin/calnexin cycle. This lectin interacts transiently with almost all of the monoglucosylated glycoproteins that are synthesized in the ER. Interacts with the DNA-binding domain of NR3C1 and mediates its nuclear export. Involved in maternal gene expression regulation. May participate in oocyte maturation via the regulation of calcium homeostasis. Present in the cortical granules of non-activated oocytes, is exocytosed during the cortical reaction in response to oocyte activation and might participate in the block to polyspermy. This Canis lupus familiaris (Dog) protein is Calreticulin (CALR).